We begin with the raw amino-acid sequence, 669 residues long: DNA ligase (669 aa).

NAD(+) contacts are provided by residues 34–38 (DAEYD), 83–84 (SL), and Glu114. The N6-AMP-lysine intermediate role is filled by Lys116. The NAD(+) site is built by Arg137, Glu171, Lys287, and Lys311. 4 residues coordinate Zn(2+): Cys405, Cys408, Cys423, and Cys428. Positions 591–669 (NIASYFAGKT…EERFLQELNK (79 aa)) constitute a BRCT domain.

Belongs to the NAD-dependent DNA ligase family. LigA subfamily. Mg(2+) serves as cofactor. Requires Mn(2+) as cofactor.

It catalyses the reaction NAD(+) + (deoxyribonucleotide)n-3'-hydroxyl + 5'-phospho-(deoxyribonucleotide)m = (deoxyribonucleotide)n+m + AMP + beta-nicotinamide D-nucleotide.. DNA ligase that catalyzes the formation of phosphodiester linkages between 5'-phosphoryl and 3'-hydroxyl groups in double-stranded DNA using NAD as a coenzyme and as the energy source for the reaction. It is essential for DNA replication and repair of damaged DNA. The polypeptide is DNA ligase (Bacillus cytotoxicus (strain DSM 22905 / CIP 110041 / 391-98 / NVH 391-98)).